Reading from the N-terminus, the 342-residue chain is Pre-mRNA-splicing factor 18 (342 aa).

At Met-1 the chain carries N-acetylmethionine.

It belongs to the PRP18 family. Heterodimer with PPIH. Interacts with PRPF4 and with the spliceosome. Part of a complex containing U4/U6 snRNPs. Also detected in the cytoplasm. As to expression, detected in brain, heart, liver and skeletal muscle.

The protein resides in the nucleus speckle. Participates in the second step of pre-mRNA splicing. Down-regulates the expression of potassium channel subunits. In Rattus norvegicus (Rat), this protein is Pre-mRNA-splicing factor 18 (Prpf18).